The sequence spans 377 residues: Actin depolymerising venom protein gelsolin 1 (377 aa).

An N-terminal signal peptide occupies residues 1-26; sequence MFRQMKLGSLATKLLLACFLVTCTSG. Gelsolin-like repeat units follow at residues 50–133, 174–243, and 298–368; these read FVPV…SEQF, IRVR…SSTS, and EKPL…PTAF.

In terms of tissue distribution, expressed by the venom gland (posterior main gland) (at protein level).

Its subcellular location is the secreted. The sequence is that of Actin depolymerising venom protein gelsolin 1 from Platymeris rhadamanthus (Red spot assassin bug).